Consider the following 152-residue polypeptide: Large ribosomal subunit protein uL30 (152 aa).

This sequence belongs to the universal ribosomal protein uL30 family. Part of the 50S ribosomal subunit.

This Archaeoglobus fulgidus (strain ATCC 49558 / DSM 4304 / JCM 9628 / NBRC 100126 / VC-16) protein is Large ribosomal subunit protein uL30.